We begin with the raw amino-acid sequence, 54 residues long: Insulin (54 aa).

3 disulfide bridges follow: Cys7–Cys39, Cys19–Cys52, and Cys38–Cys43.

It belongs to the insulin family. Heterodimer of a B chain and an A chain linked by two disulfide bonds.

It localises to the secreted. In terms of biological role, insulin decreases blood glucose concentration. It increases cell permeability to monosaccharides, amino acids and fatty acids. It accelerates glycolysis, the pentose phosphate cycle, and glycogen synthesis in liver. The chain is Insulin (ins) from Squalus acanthias (Spiny dogfish).